The following is a 156-amino-acid chain: Small ribosomal subunit protein uS7 (156 aa).

Belongs to the universal ribosomal protein uS7 family. Part of the 30S ribosomal subunit. Contacts proteins S9 and S11.

Its function is as follows. One of the primary rRNA binding proteins, it binds directly to 16S rRNA where it nucleates assembly of the head domain of the 30S subunit. Is located at the subunit interface close to the decoding center, probably blocks exit of the E-site tRNA. The polypeptide is Small ribosomal subunit protein uS7 (Desulforamulus reducens (strain ATCC BAA-1160 / DSM 100696 / MI-1) (Desulfotomaculum reducens)).